Reading from the N-terminus, the 157-residue chain is Large ribosomal subunit protein bL17 (157 aa).

The disordered stretch occupies residues 124 to 157 (AAPVVSKQDRAKRVKGSKKAESRSQENEGGDAAE).

The protein belongs to the bacterial ribosomal protein bL17 family. As to quaternary structure, part of the 50S ribosomal subunit. Contacts protein L32.

This Chlorobaculum tepidum (strain ATCC 49652 / DSM 12025 / NBRC 103806 / TLS) (Chlorobium tepidum) protein is Large ribosomal subunit protein bL17.